A 339-amino-acid chain; its full sequence is MKVYYDADCDLNLITDKKIAILGYGSQGHAHAQNLRDSGVKDVAIALRPGSASAKKAEAAGFKVLANADAAAWADILMILAPDEHQAAIYADDLHANMKPGAALAFAHGLNIHFGLIEARADIDVIMIAPKGPGHTVRSEYQRGGGVPCLIAVHQNVTGNAHDVALAYASGVGGGRSGIIETNFREECETDLFGEQVVLCGGTTALIQAGFETLVEAGYAPEMAYFECLHELKLIVDLLYEGGIANMRYSISNTAEYGDIKTGPRIITEETKKEMKRVLADIQEGRFVKDFVLDNRAGQPELKAARGLAKRHQIEETGAKLRAMMPWIGANKLVDQTKN.

The region spanning 1–182 (MKVYYDADCD…GGGRSGIIET (182 aa)) is the KARI N-terminal Rossmann domain. Residues 24–27 (YGSQ), Arg-48, Ser-51, Ser-53, and 83–86 (DEHQ) each bind NADP(+). His-108 is an active-site residue. Position 134 (Gly-134) interacts with NADP(+). Residues 183-328 (NFREECETDL…AKLRAMMPWI (146 aa)) form the KARI C-terminal knotted domain. The Mg(2+) site is built by Asp-191, Glu-195, Glu-227, and Glu-231. Substrate is bound at residue Ser-252.

Belongs to the ketol-acid reductoisomerase family. Requires Mg(2+) as cofactor.

It catalyses the reaction (2R)-2,3-dihydroxy-3-methylbutanoate + NADP(+) = (2S)-2-acetolactate + NADPH + H(+). It carries out the reaction (2R,3R)-2,3-dihydroxy-3-methylpentanoate + NADP(+) = (S)-2-ethyl-2-hydroxy-3-oxobutanoate + NADPH + H(+). Its pathway is amino-acid biosynthesis; L-isoleucine biosynthesis; L-isoleucine from 2-oxobutanoate: step 2/4. It participates in amino-acid biosynthesis; L-valine biosynthesis; L-valine from pyruvate: step 2/4. Involved in the biosynthesis of branched-chain amino acids (BCAA). Catalyzes an alkyl-migration followed by a ketol-acid reduction of (S)-2-acetolactate (S2AL) to yield (R)-2,3-dihydroxy-isovalerate. In the isomerase reaction, S2AL is rearranged via a Mg-dependent methyl migration to produce 3-hydroxy-3-methyl-2-ketobutyrate (HMKB). In the reductase reaction, this 2-ketoacid undergoes a metal-dependent reduction by NADPH to yield (R)-2,3-dihydroxy-isovalerate. The polypeptide is Ketol-acid reductoisomerase (NADP(+)) (Novosphingobium aromaticivorans (strain ATCC 700278 / DSM 12444 / CCUG 56034 / CIP 105152 / NBRC 16084 / F199)).